Here is an 827-residue protein sequence, read N- to C-terminus: Zinc finger protein 438 (827 aa).

3 disordered regions span residues 1–31 (MQNS…LQNK), 117–173 (LKLP…LYKP), and 193–232 (ALTN…AKQD). 2 stretches are compositionally biased toward polar residues: residues 16–31 (NIPS…LQNK) and 150–159 (PAQTQMCPQM). The segment covering 217–226 (PATPASPTPE) has biased composition (pro residues). 3 C2H2-type zinc fingers span residues 506–528 (HRCH…MNTH), 534–556 (YSCR…MKLH), and 566–589 (MCCE…KEVH). Positions 682-723 (FPGSKGTQEELVQHASHDWKRHPERGKPEKVHSSSEESHACP) are disordered. Composition is skewed to basic and acidic residues over residues 688–699 (TQEELVQHASHD) and 706–721 (RGKP…ESHA). A C2H2-type 4 zinc finger spans residues 775–798 (FNCLLCAEMLGQKEDLLHHWKHQH).

It is found in the nucleus. In terms of biological role, acts as a transcriptional repressor. This is Zinc finger protein 438 (ZNF438) from Pongo abelii (Sumatran orangutan).